The sequence spans 78 residues: Small ribosomal subunit protein bS18 (78 aa).

The protein belongs to the bacterial ribosomal protein bS18 family. Part of the 30S ribosomal subunit. Forms a tight heterodimer with protein bS6.

Functionally, binds as a heterodimer with protein bS6 to the central domain of the 16S rRNA, where it helps stabilize the platform of the 30S subunit. In Pseudothermotoga lettingae (strain ATCC BAA-301 / DSM 14385 / NBRC 107922 / TMO) (Thermotoga lettingae), this protein is Small ribosomal subunit protein bS18.